The sequence spans 20 residues: Unknown protein NF009 from 2D-PAGE (20 aa).

A disordered region spans residues 1-20 (ATSAAQGAALDESVRKVLKP).

This chain is Unknown protein NF009 from 2D-PAGE, found in Naegleria fowleri (Brain eating amoeba).